Reading from the N-terminus, the 200-residue chain is Large ribosomal subunit protein bL25 (200 aa).

The protein belongs to the bacterial ribosomal protein bL25 family. CTC subfamily. In terms of assembly, part of the 50S ribosomal subunit; part of the 5S rRNA/L5/L18/L25 subcomplex. Contacts the 5S rRNA. Binds to the 5S rRNA independently of L5 and L18.

In terms of biological role, this is one of the proteins that binds to the 5S RNA in the ribosome where it forms part of the central protuberance. The polypeptide is Large ribosomal subunit protein bL25 (Corynebacterium glutamicum (strain ATCC 13032 / DSM 20300 / JCM 1318 / BCRC 11384 / CCUG 27702 / LMG 3730 / NBRC 12168 / NCIMB 10025 / NRRL B-2784 / 534)).